Here is a 359-residue protein sequence, read N- to C-terminus: Peptide chain release factor 1 (359 aa).

Residue Q235 is modified to N5-methylglutamine. Positions 284 to 311 (KAESERSASRKNQVGSGDRSERIRTYNF) are disordered.

It belongs to the prokaryotic/mitochondrial release factor family. In terms of processing, methylated by PrmC. Methylation increases the termination efficiency of RF1.

The protein localises to the cytoplasm. In terms of biological role, peptide chain release factor 1 directs the termination of translation in response to the peptide chain termination codons UAG and UAA. This Bartonella quintana (strain Toulouse) (Rochalimaea quintana) protein is Peptide chain release factor 1.